The following is a 60-amino-acid chain: Ferredoxin-1 (60 aa).

4Fe-4S ferredoxin-type domains are found at residues 2-27 (LYIT…SAGD) and 28-60 (DIYV…IVQG). [4Fe-4S] cluster-binding residues include C8, C11, C14, C18, C37, C40, C48, and C52.

Requires [4Fe-4S] cluster as cofactor.

Its function is as follows. Ferredoxins are iron-sulfur proteins that transfer electrons in a wide variety of metabolic reactions. The polypeptide is Ferredoxin-1 (Chlorobium limicola).